We begin with the raw amino-acid sequence, 239 residues long: Proteasome activator complex subunit 2 (239 aa).

A2 carries the N-acetylalanine modification. A Phosphoserine modification is found at S10. The disordered stretch occupies residues D65–K86. Residues P72–K86 are compositionally biased toward basic and acidic residues.

Belongs to the PA28 family. Heterodimer of PSME1 and PSME2, which forms a hexameric ring.

Functionally, implicated in immunoproteasome assembly and required for efficient antigen processing. The PA28 activator complex enhances the generation of class I binding peptides by altering the cleavage pattern of the proteasome. This chain is Proteasome activator complex subunit 2 (PSME2), found in Bos taurus (Bovine).